A 427-amino-acid polypeptide reads, in one-letter code: Tol-Pal system protein TolB (427 aa).

The first 23 residues, 1–23 (MKLLKRLVSVFAIVLAVGSNAFA), serve as a signal peptide directing secretion.

It belongs to the TolB family. The Tol-Pal system is composed of five core proteins: the inner membrane proteins TolA, TolQ and TolR, the periplasmic protein TolB and the outer membrane protein Pal. They form a network linking the inner and outer membranes and the peptidoglycan layer.

It localises to the periplasm. In terms of biological role, part of the Tol-Pal system, which plays a role in outer membrane invagination during cell division and is important for maintaining outer membrane integrity. This chain is Tol-Pal system protein TolB, found in Haemophilus influenzae (strain ATCC 51907 / DSM 11121 / KW20 / Rd).